A 364-amino-acid chain; its full sequence is Aminomethyltransferase (364 aa).

Belongs to the GcvT family. The glycine cleavage system is composed of four proteins: P, T, L and H.

The enzyme catalyses N(6)-[(R)-S(8)-aminomethyldihydrolipoyl]-L-lysyl-[protein] + (6S)-5,6,7,8-tetrahydrofolate = N(6)-[(R)-dihydrolipoyl]-L-lysyl-[protein] + (6R)-5,10-methylene-5,6,7,8-tetrahydrofolate + NH4(+). Functionally, the glycine cleavage system catalyzes the degradation of glycine. This chain is Aminomethyltransferase, found in Shigella flexneri.